Reading from the N-terminus, the 550-residue chain is Solute carrier family 22 member 6 (550 aa).

Residues Met-1–Gln-9 lie on the Cytoplasmic side of the membrane. The helical transmembrane segment at Val-10–Leu-30 threads the bilayer. The Extracellular segment spans residues Met-31 to Gln-135. Residues Asn-39, Asn-92, and Asn-113 are each glycosylated (N-linked (GlcNAc...) asparagine). The helical transmembrane segment at Leu-136–Ala-156 threads the bilayer. The Cytoplasmic portion of the chain corresponds to Asp-157 to Val-164. Residues Leu-165 to Ile-187 form a helical membrane-spanning segment. Residues Tyr-188–Ser-195 are Extracellular-facing. Residues Gly-196 to Ile-216 traverse the membrane as a helical segment. Residues His-217–Thr-224 lie on the Cytoplasmic side of the membrane. Residues Leu-225–Pro-245 traverse the membrane as a helical segment. Residues His-246 to Arg-248 lie on the Extracellular side of the membrane. Residues His-249–Ile-269 traverse the membrane as a helical segment. The Cytoplasmic segment spans residues Glu-270–His-337. The helical transmembrane segment at Leu-338–Met-358 threads the bilayer. The Extracellular segment spans residues Asp-359–Tyr-368. A helical membrane pass occupies residues Leu-369 to Ile-389. The Cytoplasmic segment spans residues Asn-390–Arg-395. Residues Pro-396 to Pro-416 traverse the membrane as a helical segment. Residues Gln-417–Ser-420 are Extracellular-facing. Residues Ile-421–Tyr-444 traverse the membrane as a helical segment. At Thr-445–Gln-455 the chain is on the cytoplasmic side. Residues Thr-456 to Val-475 form a helical membrane-spanning segment. Residues Ser-476–Ser-484 are Extracellular-facing. The chain crosses the membrane as a helical span at residues Met-485 to Pro-505. Over Glu-506–Leu-550 the chain is Cytoplasmic. Positions Asp-514–Leu-550 are disordered.

The protein belongs to the major facilitator (TC 2.A.1) superfamily. Organic cation transporter (TC 2.A.1.19) family. In terms of processing, glycosylated. Glycosylation is necessary for proper targeting of the transporter to the plasma membrane.

It localises to the cell membrane. The enzyme catalyses prostaglandin F2alpha(out) = prostaglandin F2alpha(in). The catalysed reaction is prostaglandin E2(out) = prostaglandin E2(in). Functionally, involved in the renal elimination of endogenous and exogenous organic anions. Functions as organic anion exchanger when the uptake of one molecule of organic anion is coupled with an efflux of one molecule of endogenous dicarboxylic acid (glutarate, ketoglutarate, etc). Mediates the transport of prostaglandin E2 (PGE2) and prostaglandin F2-alpha (PGF2-alpha) and may be involved in their renal excretion. Also mediates the sodium-independent uptake of p-aminohippurate (PAH), 2,3-dimercapto-1-propanesulfonic acid (DMPS), cidofovir, adefovir, 9-(2-phosphonylmethoxyethyl) guanine (PMEG), 9-(2-phosphonylmethoxyethyl) diaminopurine (PMEDAP), ochratoxin (OTA), acyclovir (ACV), 3'-azido-3-'deoxythymidine (AZT), cimetidine (CMD), 2,4-dichloro-phenoxyacetate (2,4-D), hippurate (HA), indoleacetate (IA), indoxyl sulfate (IS) and 3-carboxy-4-methyl-5-propyl-2-furanpropionate (CMPF) and edaravone sulfate. PAH uptake is inhibited by p-chloromercuribenzenesulphonate (PCMBS), diethyl pyrocarbonate (DEPC), indomethacin, sulindac, diclofenac, carprofen, okadaic acid, benzothiazolylcysteine (BTC), S-chlorotrifluoroethylcysteine (CTFC), cysteine S-conjugates S-dichlorovinylcysteine (DCVC), furosemide, steviol, phorbol 12-myristate 13-acetate (PMA), calcium ionophore A23187, benzylpenicillin, bumetamide, losartan, probenecid, phenol red, urate, glutarate and alpha-ketoglutarate. This chain is Solute carrier family 22 member 6 (SLC22A6), found in Pongo abelii (Sumatran orangutan).